Here is a 316-residue protein sequence, read N- to C-terminus: MALYELFAHPVERGYRAGLCSKAALFLLLATALTYIPPLLVAFRSHGFWLKRSSYEEQPTVRFQHQVLLVALLGSEPGGFLAWSTFPAFNRLQEGHLRVPLVSAREEDRNQDGKMDMLHFKLELPLQSTEQVLGVQLILTFSYQLHRMSTFVMQSMAFLQSSFALPGSQLYVNGDLRLQQKQPLGYGGLDVRYNVSVINGTSPFASDYDLTRIVAAYQERNVTTILTDPSPIWLVGRAAEAPFVVNAVIRYPVEVISYLPGFWEMIKFAWIQYVSILLIFLWAFERIKRFVFQNQVVTTIPVTAMPQGELYKEHLS.

Residues 23–43 (AALFLLLATALTYIPPLLVAF) traverse the membrane as a helical segment. Asparagine 194, asparagine 199, and asparagine 221 each carry an N-linked (GlcNAc...) asparagine glycan. Residues 262–282 (FWEMIKFAWIQYVSILLIFLW) traverse the membrane as a helical segment.

Belongs to the TMEM231 family. In terms of assembly, part of the tectonic-like complex (also named B9 complex). Interacts with TMEM107.

The protein resides in the cell projection. It is found in the cilium membrane. In terms of biological role, transmembrane component of the tectonic-like complex, a complex localized at the transition zone of primary cilia and acting as a barrier that prevents diffusion of transmembrane proteins between the cilia and plasma membranes. Required for ciliogenesis and sonic hedgehog/SHH signaling. The sequence is that of Transmembrane protein 231 (TMEM231) from Bos taurus (Bovine).